A 364-amino-acid polypeptide reads, in one-letter code: Coproporphyrin III ferrochelatase (364 aa).

Residues Arg29 and Tyr118 each coordinate Fe-coproporphyrin III. Fe(2+) is bound by residues His169 and Glu250.

Belongs to the ferrochelatase family.

It localises to the cytoplasm. The enzyme catalyses Fe-coproporphyrin III + 2 H(+) = coproporphyrin III + Fe(2+). Its pathway is porphyrin-containing compound metabolism; protoheme biosynthesis. Its function is as follows. Involved in coproporphyrin-dependent heme b biosynthesis. Catalyzes the insertion of ferrous iron into coproporphyrin III to form Fe-coproporphyrin III. This is Coproporphyrin III ferrochelatase from Streptococcus pneumoniae serotype 4 (strain ATCC BAA-334 / TIGR4).